Here is a 371-residue protein sequence, read N- to C-terminus: tRNA-specific 2-thiouridylase MnmA (371 aa).

ATP-binding positions include 24–31 and Leu-50; that span reads AMSGGVDS. The active-site Nucleophile is Cys-119. Cys-119 and Cys-215 are disulfide-bonded. Gly-143 contacts ATP. The interaction with tRNA stretch occupies residues 165–167; sequence KDQ. The active-site Cysteine persulfide intermediate is the Cys-215.

This sequence belongs to the MnmA/TRMU family.

The protein localises to the cytoplasm. It catalyses the reaction S-sulfanyl-L-cysteinyl-[protein] + uridine(34) in tRNA + AH2 + ATP = 2-thiouridine(34) in tRNA + L-cysteinyl-[protein] + A + AMP + diphosphate + H(+). Functionally, catalyzes the 2-thiolation of uridine at the wobble position (U34) of tRNA, leading to the formation of s(2)U34. This is tRNA-specific 2-thiouridylase MnmA from Neorickettsia sennetsu (strain ATCC VR-367 / Miyayama) (Ehrlichia sennetsu).